Reading from the N-terminus, the 576-residue chain is Keratin, type II cytoskeletal 5 (576 aa).

The segment at 1 to 163 (MSRQSSVSFR…DPTIQRVRTE (163 aa)) is head. A phosphoserine mark is found at serine 5, serine 8, serine 16, and serine 21. Threonine 24 bears the Phosphothreonine; by CDK1 mark. Phosphoserine is present on residues serine 26, serine 36, serine 46, serine 60, serine 67, serine 71, serine 74, and serine 78. Position 147 is a phosphothreonine; by CDK1 (threonine 147). Residue threonine 162 is modified to Phosphothreonine; by AURKB. The interval 164–199 (EREQIKTLNNKFASFIDKVRFLEQQNKVLDTKWTLL) is coil 1A. The 314-residue stretch at 164-477 (EREQIKTLNN…KLLEGEECRL (314 aa)) folds into the IF rod domain. A linker 1 region spans residues 200-218 (QEQGTKTIKQNLDPLFEQY). Residues 219-311 (INNLRRQLDG…FFDAELSQMQ (93 aa)) form a coil 1B region. The interval 312–334 (THVSDTSVVLSMDNNRSLDLDSI) is linker 12. A coil 2 region spans residues 335–473 (IAEVKAQYED…ATYRKLLEGE (139 aa)). The tract at residues 474–576 (ECRLSGEGVG…TSSSRRSFKS (103 aa)) is tail. Arginine 527 bears the Omega-N-methylarginine mark. A compositionally biased stretch (gly residues) spans 540 to 557 (GFSASSGQGGGFSSGGGS). The segment at 540-576 (GFSASSGQGGGFSSGGGSSSSVKFVSTTSSSRRSFKS) is disordered. Over residues 558–576 (SSSVKFVSTTSSSRRSFKS) the composition is skewed to low complexity.

This sequence belongs to the intermediate filament family. In terms of assembly, heterodimer of a type I and a type II keratin. Heterodimer with type I keratin KRT25 leading to the formation of keratin intermediate filament (KIF) network. Forms a heterodimer (via 2B domains) with KRT14 (via 2B domains). Interacts with TCHP. Interacts with EPPK1. Interacts with AMELX. Interacts with PKP1 (via N-terminus) and PKP2. Post-translationally, phosphorylated by CDK1, AURKB and Rho-kinase, phosphorylation is regulated by the cell cycle. Thr-24 phosphorylation, mediated by CDK1, peaks during prometaphase or metaphase cells with phosphorylated filamentous structures evident throughout the cytoplasm during early mitosis. CDK1 phosphorylates Thr-24 in mitotic cells at the site of injury. O-glycosylated. In terms of tissue distribution, expressed in the epidermis (at protein level) and testis (within pachytene spermatocytes).

Its subcellular location is the cytoplasm. Required for the formation of keratin intermediate filaments in the basal epidermis and maintenance of the skin barrier in response to mechanical stress. Regulates the recruitment of Langerhans cells to the epidermis, potentially by modulation of the abundance of macrophage chemotactic cytokines, macrophage inflammatory cytokines and CTNND1 localization in keratinocytes. This Rattus norvegicus (Rat) protein is Keratin, type II cytoskeletal 5.